Here is a 301-residue protein sequence, read N- to C-terminus: Ribosomal RNA small subunit methyltransferase H (301 aa).

Residues 31–33, D49, F76, D97, and Q104 each bind S-adenosyl-L-methionine; that span reads GGY.

This sequence belongs to the methyltransferase superfamily. RsmH family.

Its subcellular location is the cytoplasm. It carries out the reaction cytidine(1402) in 16S rRNA + S-adenosyl-L-methionine = N(4)-methylcytidine(1402) in 16S rRNA + S-adenosyl-L-homocysteine + H(+). Specifically methylates the N4 position of cytidine in position 1402 (C1402) of 16S rRNA. The sequence is that of Ribosomal RNA small subunit methyltransferase H from Ehrlichia ruminantium (strain Gardel).